Here is a 565-residue protein sequence, read N- to C-terminus: Thiol:disulfide interchange protein DsbD (565 aa).

An N-terminal signal peptide occupies residues 1-19 (MAQRIFTLILLLCSTSVFA). 2 cysteine pairs are disulfide-bonded: Cys122-Cys128 and Cys182-Cys304. 7 consecutive transmembrane segments (helical) span residues 163-183 (LPFSALWALLIGIGIAFTPCV), 208-228 (LLTFIYVQGMALTYTALGLVV), 243-263 (YVLIGLAIVFTLLAMSMFGLF), 289-309 (GVFIMGAIAGLICSPCTTAPL), 323-343 (WLGGGTLYLYALGMGLPLMLI), 357-377 (WMEQVKTAFGFVILALPVFLL), and 384-404 (IWGLRLWSALGVAFFGWAFIT). The Thioredoxin domain maps to 434–565 (WAFGATHTAQ…FSAHLRDRQP (132 aa)). Cys480 and Cys483 are oxidised to a cystine.

This sequence belongs to the thioredoxin family. DsbD subfamily.

The protein localises to the cell inner membrane. The enzyme catalyses [protein]-dithiol + NAD(+) = [protein]-disulfide + NADH + H(+). The catalysed reaction is [protein]-dithiol + NADP(+) = [protein]-disulfide + NADPH + H(+). In terms of biological role, required to facilitate the formation of correct disulfide bonds in some periplasmic proteins and for the assembly of the periplasmic c-type cytochromes. Acts by transferring electrons from cytoplasmic thioredoxin to the periplasm. This transfer involves a cascade of disulfide bond formation and reduction steps. This chain is Thiol:disulfide interchange protein DsbD, found in Escherichia coli O6:H1 (strain CFT073 / ATCC 700928 / UPEC).